We begin with the raw amino-acid sequence, 94 residues long: MISKRRFSLPRLDITGMWVFSLGVWFHIVARLVYSKPWMAFFLAELIAAILVLFGAYQVLDAWIARVSREEREALEARQQAMMEGQQEGGHVSH.

The next 2 membrane-spanning stretches (helical) occupy residues 14–34 and 37–57; these read ITGMWVFSLGVWFHIVARLVY and PWMAFFLAELIAAILVLFGAY.

As to quaternary structure, interacts with pilin.

The protein resides in the cell inner membrane. Functionally, required for efficient expression of pilin. Functions as a transient chaperone for propilin, preventing it from being prematurely degraded, and also promotes propilin translocation, positioning it in the membrane for processing to mature pilin. The polypeptide is Protein TraQ (traQ) (Escherichia coli (strain K12)).